The primary structure comprises 594 residues: Potassium-transporting ATPase potassium-binding subunit (594 aa).

The next 10 helical transmembrane spans lie at 3–23, 67–87, 136–156, 179–199, 287–307, 314–334, 415–435, 453–473, 519–539, and 562–582; these read ADFL…APLL, AVAM…LQRL, ALTV…IALV, LYVL…QGVV, LEML…GEMV, VAIL…AAYF, GLYG…LMIG, VALV…VAVL, VLLG…ILAL, and LFVA…YVPA.

It belongs to the KdpA family. In terms of assembly, the system is composed of three essential subunits: KdpA, KdpB and KdpC.

The protein localises to the cell inner membrane. In terms of biological role, part of the high-affinity ATP-driven potassium transport (or Kdp) system, which catalyzes the hydrolysis of ATP coupled with the electrogenic transport of potassium into the cytoplasm. This subunit binds the periplasmic potassium ions and delivers the ions to the membrane domain of KdpB through an intramembrane tunnel. This chain is Potassium-transporting ATPase potassium-binding subunit, found in Bordetella pertussis (strain Tohama I / ATCC BAA-589 / NCTC 13251).